Here is an 85-residue protein sequence, read N- to C-terminus: NAD(P)H-quinone oxidoreductase subunit O (85 aa).

It belongs to the complex I NdhO subunit family. In terms of assembly, NDH-1 can be composed of about 15 different subunits; different subcomplexes with different compositions have been identified which probably have different functions.

It is found in the cellular thylakoid membrane. It catalyses the reaction a plastoquinone + NADH + (n+1) H(+)(in) = a plastoquinol + NAD(+) + n H(+)(out). The enzyme catalyses a plastoquinone + NADPH + (n+1) H(+)(in) = a plastoquinol + NADP(+) + n H(+)(out). Its function is as follows. NDH-1 shuttles electrons from an unknown electron donor, via FMN and iron-sulfur (Fe-S) centers, to quinones in the respiratory and/or the photosynthetic chain. The immediate electron acceptor for the enzyme in this species is believed to be plastoquinone. Couples the redox reaction to proton translocation, and thus conserves the redox energy in a proton gradient. Cyanobacterial NDH-1 also plays a role in inorganic carbon-concentration. The sequence is that of NAD(P)H-quinone oxidoreductase subunit O from Synechococcus sp. (strain WH7803).